Reading from the N-terminus, the 185-residue chain is Peptidyl-tRNA hydrolase (185 aa).

Position 14 (Tyr14) interacts with tRNA. The Proton acceptor role is filled by His19. Residues Tyr65, Asn67, and Asn113 each coordinate tRNA.

It belongs to the PTH family. Monomer.

It localises to the cytoplasm. The enzyme catalyses an N-acyl-L-alpha-aminoacyl-tRNA + H2O = an N-acyl-L-amino acid + a tRNA + H(+). Functionally, hydrolyzes ribosome-free peptidyl-tRNAs (with 1 or more amino acids incorporated), which drop off the ribosome during protein synthesis, or as a result of ribosome stalling. Its function is as follows. Catalyzes the release of premature peptidyl moieties from peptidyl-tRNA molecules trapped in stalled 50S ribosomal subunits, and thus maintains levels of free tRNAs and 50S ribosomes. The sequence is that of Peptidyl-tRNA hydrolase from Rickettsia rickettsii (strain Iowa).